The sequence spans 115 residues: Cell division protein FtsL (115 aa).

The Cytoplasmic portion of the chain corresponds to 1-25 (MNTATRVIVAQNVRTRNRTFQITKQ). The helical transmembrane segment at 26–46 (GVVIVALVIALLCSAFGVVYF) threads the bilayer. Residues 47–115 (KDLNRRLFIQ…ILVNADAMIE (69 aa)) lie on the Periplasmic side of the membrane.

It belongs to the FtsL family. As to quaternary structure, part of a complex composed of FtsB, FtsL and FtsQ.

It is found in the cell inner membrane. In terms of biological role, essential cell division protein. May link together the upstream cell division proteins, which are predominantly cytoplasmic, with the downstream cell division proteins, which are predominantly periplasmic. This Coxiella burnetii (strain RSA 493 / Nine Mile phase I) protein is Cell division protein FtsL.